A 342-amino-acid chain; its full sequence is 4-amino-5-hydroxymethyl-2-methylpyrimidine phosphate synthase (342 aa).

The residue at position 62 (lysine 62) is an N6-(pyridoxal phosphate)lysine. Residue histidine 66 is part of the active site. 115–118 (GEFG) serves as a coordination point for pyridoxal 5'-phosphate. A CCCFC; essential for catalytic activity, may be the site of iron coordination motif is present at residues 195–199 (CCCFC).

This sequence belongs to the NMT1/THI5 family. In terms of assembly, homodimer. Fe cation serves as cofactor.

The catalysed reaction is N(6)-(pyridoxal phosphate)-L-lysyl-[4-amino-5-hydroxymethyl-2-methylpyrimidine phosphate synthase] + L-histidyl-[4-amino-5-hydroxymethyl-2-methylpyrimidine phosphate synthase] + 2 Fe(3+) + 4 H2O = L-lysyl-[4-amino-5-hydroxymethyl-2-methylpyrimidine phosphate synthase] + (2S)-2-amino-5-hydroxy-4-oxopentanoyl-[4-amino-5-hydroxymethyl-2-methylpyrimidine phosphate synthase] + 4-amino-2-methyl-5-(phosphooxymethyl)pyrimidine + 3-oxopropanoate + 2 Fe(2+) + 2 H(+). The protein operates within cofactor biosynthesis; thiamine diphosphate biosynthesis. In terms of biological role, responsible for the formation of the pyrimidine heterocycle in the thiamine biosynthesis pathway. Catalyzes the formation of hydroxymethylpyrimidine phosphate (HMP-P) from histidine and pyridoxal phosphate (PLP). The protein uses PLP and the active site histidine to form HMP-P, generating an inactive enzyme. The enzyme can only undergo a single turnover, which suggests it is a suicide enzyme. The chain is 4-amino-5-hydroxymethyl-2-methylpyrimidine phosphate synthase from Aspergillus parasiticus.